The chain runs to 510 residues: GTPase Der (510 aa).

2 EngA-type G domains span residues 3–167 and 230–405; these read LKLA…GPEA and IRLA…KDWT. GTP contacts are provided by residues 9–16, 56–60, 119–122, 236–243, 283–287, and 348–351; these read GRPNVGKS, DTAGF, NKAE, GRPNAGKS, DTAGL, and SKWD. Residues 406 to 490 form the KH-like domain; that stretch reads ARAKTGDLNR…PIRLFVRQGK (85 aa).

It belongs to the TRAFAC class TrmE-Era-EngA-EngB-Septin-like GTPase superfamily. EngA (Der) GTPase family. As to quaternary structure, associates with the 50S ribosomal subunit.

Functionally, GTPase that plays an essential role in the late steps of ribosome biogenesis. This is GTPase Der from Hyphomonas neptunium (strain ATCC 15444).